The chain runs to 130 residues: Protein CPn_0713/CP_0033/CPj0713/CpB0740 (130 aa).

It belongs to the chlamydial CPn_0713/CT_663/TC_0034 family.

The sequence is that of Protein CPn_0713/CP_0033/CPj0713/CpB0740 from Chlamydia pneumoniae (Chlamydophila pneumoniae).